The sequence spans 643 residues: Arginine--tRNA ligase, mitochondrial (643 aa).

Residues 188-198 (PNIAKPFHAGH) carry the 'HIGH' region motif.

This sequence belongs to the class-I aminoacyl-tRNA synthetase family.

It is found in the mitochondrion matrix. It carries out the reaction tRNA(Arg) + L-arginine + ATP = L-arginyl-tRNA(Arg) + AMP + diphosphate. The chain is Arginine--tRNA ligase, mitochondrial (MSR1) from Saccharomyces cerevisiae (strain ATCC 204508 / S288c) (Baker's yeast).